A 129-amino-acid chain; its full sequence is Acyl carrier protein 2, chloroplastic (129 aa).

A chloroplast-targeting transit peptide spans 1-49 (MASAAASAVSFARPVKAICVNSVSFSALRKDNVSFRLQPVPQRFSVCCA). A Carrier domain is found at 52 to 127 (KETVEKVCDI…DAANLIDSLV (76 aa)). Ser-87 carries the O-(pantetheine 4'-phosphoryl)serine modification.

Belongs to the acyl carrier protein (ACP) family. 4'-phosphopantetheine is transferred from CoA to a specific serine of apo-ACP by acpS. This modification is essential for activity because fatty acids are bound in thioester linkage to the sulfhydryl of the prosthetic group.

The protein resides in the plastid. It is found in the chloroplast. It participates in lipid metabolism; fatty acid biosynthesis. Its function is as follows. Carrier of the growing fatty acid chain in fatty acid biosynthesis. This is Acyl carrier protein 2, chloroplastic (ACL1.2) from Hordeum vulgare (Barley).